The following is a 318-amino-acid chain: Receptor homology region, transmembrane domain- and RING domain-containing protein 6 (318 aa).

The N-terminal stretch at 1-20 (MNGSWITILSLLVISQLASS) is a signal peptide. The Lumenal segment spans residues 22-162 (VTLIGKNTFL…LIPGFGISSW (141 aa)). Cysteine 62 and cysteine 87 are joined by a disulfide. Residues 70–143 (EKGSKFRPSY…RTSGEVLKEY (74 aa)) form the PA domain. Asparagine 121 carries an N-linked (GlcNAc...) asparagine glycan. Residues 163–183 (SIMAITFVSLLVISAVLASYF) traverse the membrane as a helical segment. Over 184 to 318 (SVRRHRIRQH…DLPIVVRVYL (135 aa)) the chain is Cytoplasmic. The segment at 233-275 (CAICIDDYRVGEILRILPCKHKYHAVCIDSWLGRCRSFCPVCK) adopts an RING-type; atypical zinc-finger fold.

The protein resides in the prevacuolar compartment membrane. Its subcellular location is the protein storage vacuole membrane. In terms of biological role, involved in the trafficking of vacuolar proteins. May function as a sorting receptor for protein trafficking to the protein storage vacuole (PSV). This Arabidopsis thaliana (Mouse-ear cress) protein is Receptor homology region, transmembrane domain- and RING domain-containing protein 6 (RMR6).